We begin with the raw amino-acid sequence, 491 residues long: Argininosuccinate lyase (491 aa).

This sequence belongs to the lyase 1 family. Argininosuccinate lyase subfamily.

It is found in the cytoplasm. The enzyme catalyses 2-(N(omega)-L-arginino)succinate = fumarate + L-arginine. It functions in the pathway amino-acid biosynthesis; L-arginine biosynthesis; L-arginine from L-ornithine and carbamoyl phosphate: step 3/3. The sequence is that of Argininosuccinate lyase from Methanococcoides burtonii (strain DSM 6242 / NBRC 107633 / OCM 468 / ACE-M).